The sequence spans 59 residues: uncharacterized protein (59 aa).

This is an uncharacterized protein from Haemophilus influenzae (strain ATCC 51907 / DSM 11121 / KW20 / Rd).